The chain runs to 397 residues: Bifunctional arginine demethylase and lysyl-hydroxylase psr-1 (397 aa).

One can recognise a JmjC domain in the interval 146 to 310 (RKTKKLSEDY…LVWPKTVRGR (165 aa)). Residue threonine 189 coordinates substrate. Residues histidine 192 and aspartate 194 each contribute to the Fe cation site. Asparagine 202 contacts 2-oxoglutarate. Lysine 209 serves as a coordination point for substrate. Residue histidine 278 coordinates Fe cation. Threonine 290 is a binding site for 2-oxoglutarate. Polar residues predominate over residues 334–344 (SCTDTPPQSLN). Positions 334-383 (SCTDTPPQSLNDSSSDSSSSSSSSDDSSDSETEEDSGRCGLGNRKRRNDV) are disordered. Low complexity predominate over residues 345-358 (DSSSDSSSSSSSSD).

The protein belongs to the JMJD6 family. Interacts with ced-5 and ced-12. Requires Fe(2+) as cofactor.

Its subcellular location is the nucleus. In terms of biological role, dioxygenase that can both act as a histone arginine demethylase and a lysyl-hydroxylase. This Caenorhabditis briggsae protein is Bifunctional arginine demethylase and lysyl-hydroxylase psr-1 (psr-1).